We begin with the raw amino-acid sequence, 309 residues long: Ribonuclease Z (309 aa).

Zn(2+) is bound by residues histidine 61, histidine 63, aspartate 65, histidine 66, histidine 144, aspartate 212, and histidine 271. The active-site Proton acceptor is the aspartate 65.

The protein belongs to the RNase Z family. Homodimer. Zn(2+) serves as cofactor.

The enzyme catalyses Endonucleolytic cleavage of RNA, removing extra 3' nucleotides from tRNA precursor, generating 3' termini of tRNAs. A 3'-hydroxy group is left at the tRNA terminus and a 5'-phosphoryl group is left at the trailer molecule.. Functionally, zinc phosphodiesterase, which displays some tRNA 3'-processing endonuclease activity. Probably involved in tRNA maturation, by removing a 3'-trailer from precursor tRNA. The chain is Ribonuclease Z from Clostridium acetobutylicum (strain ATCC 824 / DSM 792 / JCM 1419 / IAM 19013 / LMG 5710 / NBRC 13948 / NRRL B-527 / VKM B-1787 / 2291 / W).